The sequence spans 188 residues: Elongation factor P (188 aa).

Lys-34 is subject to N6-(3,6-diaminohexanoyl)-5-hydroxylysine.

It belongs to the elongation factor P family. May be beta-lysylated on the epsilon-amino group of Lys-34 by the combined action of EpmA and EpmB, and then hydroxylated on the C5 position of the same residue by EpmC (if this protein is present). Lysylation is critical for the stimulatory effect of EF-P on peptide-bond formation. The lysylation moiety may extend toward the peptidyltransferase center and stabilize the terminal 3-CCA end of the tRNA. Hydroxylation of the C5 position on Lys-34 may allow additional potential stabilizing hydrogen-bond interactions with the P-tRNA.

It localises to the cytoplasm. It functions in the pathway protein biosynthesis; polypeptide chain elongation. Involved in peptide bond synthesis. Alleviates ribosome stalling that occurs when 3 or more consecutive Pro residues or the sequence PPG is present in a protein, possibly by augmenting the peptidyl transferase activity of the ribosome. Modification of Lys-34 is required for alleviation. This is Elongation factor P from Citrobacter koseri (strain ATCC BAA-895 / CDC 4225-83 / SGSC4696).